Here is a 246-residue protein sequence, read N- to C-terminus: Proteasome subunit alpha type-6 (246 aa).

It belongs to the peptidase T1A family. In terms of assembly, the 26S proteasome consists of a 20S proteasome core and two 19S regulatory subunits. The 20S proteasome core is composed of 28 subunits that are arranged in four stacked rings, resulting in a barrel-shaped structure. The two end rings are each formed by seven alpha subunits, and the two central rings are each formed by seven beta subunits. The catalytic chamber with the active sites is on the inside of the barrel.

It localises to the cytoplasm. Its subcellular location is the nucleus. The proteasome is a multicatalytic proteinase complex which is characterized by its ability to cleave peptides with Arg, Phe, Tyr, Leu, and Glu adjacent to the leaving group at neutral or slightly basic pH. The proteasome has an ATP-dependent proteolytic activity. This Nicotiana tabacum (Common tobacco) protein is Proteasome subunit alpha type-6 (PAA1).